A 248-amino-acid polypeptide reads, in one-letter code: UPF0246 protein lp_0089 (248 aa).

This sequence belongs to the UPF0246 family.

The polypeptide is UPF0246 protein lp_0089 (Lactiplantibacillus plantarum (strain ATCC BAA-793 / NCIMB 8826 / WCFS1) (Lactobacillus plantarum)).